We begin with the raw amino-acid sequence, 148 residues long: Protein SprT-like (148 aa).

The region spanning 6 to 147 (LQQLVATISM…CGRCQGPIKL (142 aa)) is the SprT-like domain. Histidine 67 contacts Zn(2+). Glutamate 68 is a catalytic residue. Histidine 71 serves as a coordination point for Zn(2+).

Belongs to the SprT family. Requires Zn(2+) as cofactor.

The protein resides in the cytoplasm. This chain is Protein SprT-like, found in Lactiplantibacillus plantarum (strain ATCC BAA-793 / NCIMB 8826 / WCFS1) (Lactobacillus plantarum).